We begin with the raw amino-acid sequence, 336 residues long: tRNA-splicing endonuclease (336 aa).

Active-site residues include Tyr-271, His-282, and Lys-313.

It belongs to the tRNA-intron endonuclease family. Archaeal long subfamily. As to quaternary structure, homodimer.

The catalysed reaction is pretRNA = a 3'-half-tRNA molecule with a 5'-OH end + a 5'-half-tRNA molecule with a 2',3'-cyclic phosphate end + an intron with a 2',3'-cyclic phosphate and a 5'-hydroxyl terminus.. Its function is as follows. Endonuclease that removes tRNA introns. Cleaves pre-tRNA at the 5'- and 3'-splice sites to release the intron. The products are an intron and two tRNA half-molecules bearing 2',3' cyclic phosphate and 5'-OH termini. Recognizes a pseudosymmetric substrate in which 2 bulged loops of 3 bases are separated by a stem of 4 bp. The chain is tRNA-splicing endonuclease from Natronomonas pharaonis (strain ATCC 35678 / DSM 2160 / CIP 103997 / JCM 8858 / NBRC 14720 / NCIMB 2260 / Gabara) (Halobacterium pharaonis).